Here is a 280-residue protein sequence, read N- to C-terminus: Octanoyltransferase LIP2p2, chloroplastic (280 aa).

The transit peptide at 1–34 directs the protein to the chloroplast; the sequence is MVFSVATSSVTNPKLHHHHHLSDFNRNRVSTSLK. In terms of domain architecture, BPL/LPL catalytic spans 81–270; sequence QECSDSLIIL…EFSEVFQLQM (190 aa). Residues 123–130, 191–193, and 204–206 contribute to the substrate site; these read RGGEVTYH, AIG, and GLA. Cys222 functions as the Acyl-thioester intermediate in the catalytic mechanism.

The protein belongs to the LipB family. In terms of tissue distribution, expressed in roots, leaves, cauline leaves, stems, siliques and flowers.

It is found in the plastid. Its subcellular location is the chloroplast. The enzyme catalyses octanoyl-[ACP] + L-lysyl-[protein] = N(6)-octanoyl-L-lysyl-[protein] + holo-[ACP] + H(+). It participates in protein modification; protein lipoylation via endogenous pathway; protein N(6)-(lipoyl)lysine from octanoyl-[acyl-carrier-protein]: step 1/2. Catalyzes the transfer of endogenously produced octanoic acid from octanoyl-acyl-carrier-protein onto the lipoyl domains of lipoate-dependent enzymes. Lipoyl-ACP can also act as a substrate although octanoyl-ACP is likely to be the physiological substrate. Together with LIP1P is essential for de novo plastidial protein lipoylation during seed development. Acts redundantly with LIP2P. The protein is Octanoyltransferase LIP2p2, chloroplastic of Arabidopsis thaliana (Mouse-ear cress).